The chain runs to 154 residues: Protein X (154 aa).

Residues 68–117 (PCALRFTSARRMETTVNAHQILPKVLHKRTLGLSAMSTTDLEAYFKACLF) are mitochondrial targeting sequence.

This sequence belongs to the orthohepadnavirus protein X family. May form homodimer. May interact with host CEBPA, CFLAR, CREB1, DDB1, E4F1, HBXIP, HSPD1/HSP60, NFKBIA, POLR2E and SMAD4. Interacts with host SMC5-SMC6 complex and induces its degradation. Interacts with host TRPC4AP; leading to prevent ubiquitination of TRPC4AP. Interacts with host PLSCR1; this interaction promotes ubiquitination and degradation of HBx and impairs HBx-mediated cell proliferation. A fraction may be phosphorylated in insect cells and HepG2 cells, a human hepatoblastoma cell line. Phosphorylated in vitro by host protein kinase C or mitogen-activated protein kinase. N-acetylated in insect cells.

It localises to the host cytoplasm. It is found in the host nucleus. The protein resides in the host mitochondrion. In terms of biological role, multifunctional protein that plays a role in silencing host antiviral defenses and promoting viral transcription. Does not seem to be essential for HBV infection. May be directly involved in development of cirrhosis and liver cancer (hepatocellular carcinoma). Most of cytosolic activities involve modulation of cytosolic calcium. The effect on apoptosis is controversial depending on the cell types in which the studies have been conducted. May induce apoptosis by localizing in mitochondria and causing loss of mitochondrial membrane potential. May also modulate apoptosis by binding host CFLAR, a key regulator of the death-inducing signaling complex (DISC). Promotes viral transcription by using the host E3 ubiquitin ligase DDB1 to target the SMC5-SMC6 complex to proteasomal degradation. This host complex would otherwise bind to viral episomal DNA, and prevents its transcription. Moderately stimulates transcription of many different viral and cellular transcription elements. Promoters and enhancers stimulated by HBx contain DNA binding sites for NF-kappa-B, AP-1, AP-2, c-EBP, ATF/CREB, or the calcium-activated factor NF-AT. The polypeptide is Protein X (Hepatitis B virus genotype E (isolate Cote d'Ivoire/ABI-129/2003) (HBV-E)).